Reading from the N-terminus, the 310-residue chain is Glutaminase (310 aa).

Residues S67, N118, E161, N168, Y192, Y244, and V262 each coordinate substrate.

It belongs to the glutaminase family. In terms of assembly, homotetramer.

It carries out the reaction L-glutamine + H2O = L-glutamate + NH4(+). This chain is Glutaminase, found in Legionella pneumophila subsp. pneumophila (strain Philadelphia 1 / ATCC 33152 / DSM 7513).